Reading from the N-terminus, the 303-residue chain is Pseudouridine-5'-phosphate glycosidase (303 aa).

The active-site Proton donor is Glu-24. Lys-85 and Val-105 together coordinate substrate. Position 137 (Asp-137) interacts with Mn(2+). 139–141 (SAD) provides a ligand contact to substrate. Lys-158 functions as the Nucleophile in the catalytic mechanism.

It belongs to the pseudouridine-5'-phosphate glycosidase family. As to quaternary structure, homotrimer. Requires Mn(2+) as cofactor.

It carries out the reaction D-ribose 5-phosphate + uracil = psi-UMP + H2O. Functionally, catalyzes the reversible cleavage of pseudouridine 5'-phosphate (PsiMP) to ribose 5-phosphate and uracil. Functions biologically in the cleavage direction, as part of a pseudouridine degradation pathway. In Herpetosiphon aurantiacus (strain ATCC 23779 / DSM 785 / 114-95), this protein is Pseudouridine-5'-phosphate glycosidase.